A 105-amino-acid chain; its full sequence is MKFRPLHDRVVVRRVEEESKTAGGIIIPDSAQEKPSQGEVVAVGPGARGDDGKLVALDVKVGDRVIFGKWSGTEVKIDGEELLIMKESDIMGVLEGAASKKKAAA.

Belongs to the GroES chaperonin family. As to quaternary structure, heptamer of 7 subunits arranged in a ring. Interacts with the chaperonin GroEL.

Its subcellular location is the cytoplasm. Its function is as follows. Together with the chaperonin GroEL, plays an essential role in assisting protein folding. The GroEL-GroES system forms a nano-cage that allows encapsulation of the non-native substrate proteins and provides a physical environment optimized to promote and accelerate protein folding. GroES binds to the apical surface of the GroEL ring, thereby capping the opening of the GroEL channel. This is Co-chaperonin GroES from Parvibaculum lavamentivorans (strain DS-1 / DSM 13023 / NCIMB 13966).